Consider the following 520-residue polypeptide: tRNA (guanine-N(7)-)-methyltransferase non-catalytic subunit TRM82 (520 aa).

Residues 51-102 form a disordered region; the sequence is PLDSEISPDRASSAGTCAEPPEKRRKLTPPVDESGEAQTEQSAKAKARKSQT. WD repeat units follow at residues 105–145, 244–291, and 296–338; these read QAWS…KLTQ, GHVS…HIIH, and GHTS…QTIP.

This sequence belongs to the WD repeat TRM82 family. As to quaternary structure, forms a heterodimer with the catalytic subunit TRM8.

The protein resides in the nucleus. Its pathway is tRNA modification; N(7)-methylguanine-tRNA biosynthesis. Functionally, required for the formation of N(7)-methylguanine at position 46 (m7G46) in tRNA. In the complex, it is required to stabilize and induce conformational changes of the catalytic subunit. The chain is tRNA (guanine-N(7)-)-methyltransferase non-catalytic subunit TRM82 from Coccidioides immitis (strain RS) (Valley fever fungus).